The primary structure comprises 397 residues: N-acetyllactosaminide beta-1,3-N-acetylglucosaminyltransferase 2 (397 aa).

The Cytoplasmic portion of the chain corresponds to 1 to 7 (MSVGRRR). A helical; Signal-anchor for type II membrane protein transmembrane segment spans residues 8–28 (IKLLGILMMANVFIYFIMEVS). Residues 29–397 (KSSSQEKNGK…SQLQSAHLKC (369 aa)) are Lumenal-facing. Residues Asn79, Asn89, Asn127, Asn173, and Asn219 are each glycosylated (N-linked (GlcNAc...) asparagine).

It belongs to the glycosyltransferase 31 family. In terms of assembly, interacts with B3GNT8; this interaction greatly increases B3GNT2 catalytic activity, independently of B3GNT8 enzymatic activity. It depends on Mn(2+) as a cofactor. As to expression, ubiquitous.

The protein resides in the golgi apparatus membrane. It carries out the reaction a beta-D-galactosyl-(1-&gt;4)-N-acetyl-beta-D-glucosaminyl derivative + UDP-N-acetyl-alpha-D-glucosamine = an N-acetyl-beta-D-glucosaminyl-(1-&gt;3)-beta-D-galactosyl-(1-&gt;4)-N-acetyl-beta-D-glucosaminyl derivative + UDP + H(+). It participates in protein modification; protein glycosylation. Its function is as follows. Beta-1,3-N-acetylglucosaminyltransferase involved in the synthesis of poly-N-acetyllactosamine. Catalyzes the initiation and elongation of poly-N-acetyllactosamine chains. Shows a marked preference for Gal(beta1-4)Glc(NAc)-based acceptors. Probably constitutes the main polylactosamine synthase. This Homo sapiens (Human) protein is N-acetyllactosaminide beta-1,3-N-acetylglucosaminyltransferase 2 (B3GNT2).